The following is a 290-amino-acid chain: Nucleotide-binding protein Aave_3603 (290 aa).

13–20 (GMSGSGKS) is a binding site for ATP. 62 to 65 (DVRS) contacts GTP.

This sequence belongs to the RapZ-like family.

In terms of biological role, displays ATPase and GTPase activities. In Paracidovorax citrulli (strain AAC00-1) (Acidovorax citrulli), this protein is Nucleotide-binding protein Aave_3603.